A 1481-amino-acid chain; its full sequence is MQRSPLEKASVVSKLFFSWTRPILKKGYRQRLELSDIYHISSSDSADNLSEKLEREWDRELASKKNPKLINALRRCFFWRFMFYGIILYLGEVTKAVQPLLLGRIIASYDPDNKAERSIAIYLGIGLCLLFIVRTLLLHPAIFGLHHIGMQMRIAMFSLIYKKTLKLSSRVLDKISIGQLVSLLSNNLNKFDEGLALAHFVWIAPLQVTLLMGLLWELLQAFTFCGLAFLVVLAFLQAGLGKMMMKYRDQRAGKINERLVITSEIIENIQSVKAYCWEEAMEKIIENLRQTELKLTRKAAYVRYLNSSAFFFSGFFVVFLSVLPYALLKGIILRKIFTTISFCIVLRMAVTRQFPWAVQTWYDSLGAINKIQDFLQKQEYKTLEYNLTTTDVVMENVTAYWEEGFSKLFEKAKENNNNRKISNGDNNLFFSNLLLGAPVLKDISFKIERGQLMAVAGSTGAGKTSLLMMIMGELEPSEGKIKHSGRISFCSQYSWIMPGTIKDNIIFGVSYDEYRYRSVIKACQLEEDISKFAEKDNIVLGEGGITLSGGQRARISLARAVYKDADLYLLDSPFGYLDVLTEKEIFESCVCKLMANKTRILVTSKMEHLKKADKILILHEGSIYFYGTFSELQNQRPDFSSKLMGCDTFDQFTAERRNSIITETLRRFSLEGDTSVSWNETKKPSFKQTGEFGEKRKNSILNSINSKRKFSVAQKTSLQMNGIEETSDEPLERKLSLVPHSEPGEGILPRSNAVNSGPTFLGGRRQSVLNLMTCSSVNQGQSIHRKTATSTRKMSLAPQASLAEIDIYSRRLSQDTGLEISEEINEEDLRDCFFDDVENIPAVTTWNTYLRYITVHKSLMFVLIWCLVVFLAEVAASLVVLCLFPKILFQDKGNSTKSANNSYAVIITSTSSYYIFYIYVGVADTLLALGLFRGLPLVHTLITVSKTLHHKMLQSVLQAPMSTLNTLKTGGILNRFSKDIAVLDDLLPLTIFDFVQLLLIVIGAVVVVSVLQPYIFLATVPVIAAFILLRAYFLHTSQQLKQLESEGRSPIFTHLVTSLKGLWTLRAFGRQPYFETLFHKALNLHTANWFLYLSTLRWFQMRIEMIFVIFFIAVTFISILTTGEGEGRVGIILTLAMNIMGTLQWAVNSSIDVDSLMRSVSRVFKFIDMPTEDGKPNNSFRPSKDSQLSKVMVIENQHVKKDDIWPSGGQMTVKDLTAKYIDGGNAILENISFSISPGQRVGLLGRTGSGKSTLLLAFLRLLNTKGEIQIDGVSWDSITLQQWRKAFGVIPQKVFIFSGTFRKNLDPYGQWSDQEIWKVADEVGLRSVIEQFPGKLDFVLVDGGCVLSHGHKQLMCLARSVLSKAKILLLDEPSAHLDPITYQIIRRTLKQAFADCTVILSEHRIEAMLECQRFLVIEENKVRQYDSIQRMLSEKSLFRQAISPADRLKLLPQRNSSRQKSRSNIAALKEETEEEVQETKI.

Over 1-77 the chain is Cytoplasmic; that stretch reads MQRSPLEKAS…KLINALRRCF (77 aa). The chain crosses the membrane as a helical span at residues 78-98; the sequence is FWRFMFYGIILYLGEVTKAVQ. Positions 81-365 constitute an ABC transmembrane type-1 1 domain; sequence FMFYGIILYL…WAVQTWYDSL (285 aa). Over 99 to 122 the chain is Extracellular; that stretch reads PLLLGRIIASYDPDNKAERSIAIY. Residues 123–146 traverse the membrane as a helical segment; the sequence is LGIGLCLLFIVRTLLLHPAIFGLH. The Cytoplasmic segment spans residues 147-195; it reads HIGMQMRIAMFSLIYKKTLKLSSRVLDKISIGQLVSLLSNNLNKFDEGL. The chain crosses the membrane as a helical span at residues 196 to 216; the sequence is ALAHFVWIAPLQVTLLMGLLW. At 217–222 the chain is on the extracellular side; it reads ELLQAF. The helical transmembrane segment at 223–243 threads the bilayer; it reads TFCGLAFLVVLAFLQAGLGKM. Topologically, residues 244–298 are cytoplasmic; the sequence is MMKYRDQRAGKINERLVITSEIIENIQSVKAYCWEEAMEKIIENLRQTELKLTRK. The helical transmembrane segment at 299–319 threads the bilayer; the sequence is AAYVRYLNSSAFFFSGFFVVF. Residues 320–339 lie on the Extracellular side of the membrane; the sequence is LSVLPYALLKGIILRKIFTT. A helical transmembrane segment spans residues 340–358; that stretch reads ISFCIVLRMAVTRQFPWAV. Over 359–858 the chain is Cytoplasmic; that stretch reads QTWYDSLGAI…YLRYITVHKS (500 aa). ATP is bound by residues Trp401, 457-464, and Gln492; that span reads GSTGAGKT. An ABC transporter 1 domain is found at 423–645; it reads NGDNNLFFSN…RPDFSSKLMG (223 aa). A lipid anchor (S-palmitoyl cysteine) is attached at Cys523. Phosphoserine occurs at positions 548 and 659. Positions 653-831 are disordered R region; it reads TAERRNSIIT…EEINEEDLRD (179 aa). Ser669 is subject to Phosphoserine; by PKA. Phosphoserine is present on Ser685. Lys687 is covalently cross-linked (Glycyl lysine isopeptide (Lys-Gly) (interchain with G-Cter in ubiquitin)). Phosphoserine occurs at positions 699 and 711. Thr716 carries the post-translational modification Phosphothreonine. Residues Ser736, Ser767, Ser790, Ser795, and Ser813 each carry the phosphoserine modification. Residues 859-879 traverse the membrane as a helical segment; that stretch reads LMFVLIWCLVVFLAEVAASLV. In terms of domain architecture, ABC transmembrane type-1 2 spans 859–1155; that stretch reads LMFVLIWCLV…AVNSSIDVDS (297 aa). Residues 880-918 lie on the Extracellular side of the membrane; that stretch reads VLCLFPKILFQDKGNSTKSANNSYAVIITSTSSYYIFYI. 2 N-linked (GlcNAc...) asparagine glycosylation sites follow: Asn894 and Asn900. A discontinuously helical transmembrane segment spans residues 919–939; it reads YVGVADTLLALGLFRGLPLVH. Residues 940 to 990 are Cytoplasmic-facing; it reads TLITVSKTLHHKMLQSVLQAPMSTLNTLKTGGILNRFSKDIAVLDDLLPLT. The helical transmembrane segment at 991–1011 threads the bilayer; it reads IFDFVQLLLIVIGAVVVVSVL. Residues 1012 to 1013 lie on the Extracellular side of the membrane; that stretch reads QP. Residues 1014 to 1034 form a helical membrane-spanning segment; sequence YIFLATVPVIAAFILLRAYFL. Over 1035-1095 the chain is Cytoplasmic; it reads HTSQQLKQLE…TANWFLYLST (61 aa). A helical membrane pass occupies residues 1096-1116; sequence LRWFQMRIEMIFVIFFIAVTF. The Extracellular segment spans residues 1117–1130; that stretch reads ISILTTGEGEGRVG. Residues 1131-1151 traverse the membrane as a helical segment; sequence IILTLAMNIMGTLQWAVNSSI. Residues 1152–1481 are Cytoplasmic-facing; that stretch reads DVDSLMRSVS…TEEEVQETKI (330 aa). One can recognise an ABC transporter 2 domain in the interval 1211–1444; sequence MTVKDLTAKY…KSLFRQAISP (234 aa). ATP contacts are provided by residues Tyr1220 and 1245 to 1252; that span reads GRTGSGKS. The segment at 1387-1481 is interaction with GORASP2; sequence RTLKQAFADC…TEEEVQETKI (95 aa). The S-palmitoyl cysteine moiety is linked to residue Cys1396. Residues 1452-1481 form a disordered region; it reads PQRNSSRQKSRSNIAALKEETEEEVQETKI. Over residues 1453 to 1464 the composition is skewed to low complexity; sequence QRNSSRQKSRSN. Phosphoserine is present on Ser1457. Acidic residues predominate over residues 1471–1481; that stretch reads ETEEEVQETKI. The short motif at 1479-1481 is the PDZ-binding element; that stretch reads TKI.

It belongs to the ABC transporter superfamily. ABCC family. CFTR transporter (TC 3.A.1.202) subfamily. As to quaternary structure, monomer; does not require oligomerization for channel activity. May form oligomers in the membrane. Interacts with SLC26A3, SLC26A6 and NHERF1. Interacts with SHANK2. Interacts with MYO6. Interacts (via C-terminus) with GOPC (via PDZ domain); this promotes CFTR internalization and thereby decreases channel activity. Interacts with SLC4A7 through NHERF1. Found in a complex with MYO5B and RAB11A. Interacts with ANO1. Interacts with SLC26A8. Interacts with AHCYL1; the interaction increases CFTR activity. Interacts with CSE1L. The core-glycosylated form interacts with GORASP2 (via PDZ GRASP-type 1 domain) in respone to ER stress. Interacts with MARCHF2; the interaction leads to CFTR ubiqtuitination and degradation. Interacts with ADGRG2. N-glycosylated. In terms of processing, phosphorylated; cAMP treatment promotes phosphorylation and activates the channel. Dephosphorylation decreases the ATPase activity (in vitro). Phosphorylation at PKA sites activates the channel. Phosphorylation at PKC sites enhances the response to phosphorylation by PKA. Phosphorylated by AMPK; this inhibits channel activity. Post-translationally, ubiquitinated, leading to its degradation in the lysosome. Deubiquitination by USP10 in early endosomes enhances its endocytic recycling to the cell membrane. Ubiquitinated by RNF185 during ER stress. Ubiquitinated by MARCHF2.

It is found in the apical cell membrane. The protein resides in the early endosome membrane. It localises to the cell membrane. The protein localises to the recycling endosome membrane. Its subcellular location is the endoplasmic reticulum membrane. It is found in the nucleus. The enzyme catalyses ATP + H2O + closed Cl(-) channel = ADP + phosphate + open Cl(-) channel.. The catalysed reaction is chloride(in) = chloride(out). It catalyses the reaction hydrogencarbonate(in) = hydrogencarbonate(out). It carries out the reaction ATP + H2O = ADP + phosphate + H(+). Functionally, epithelial ion channel that plays an important role in the regulation of epithelial ion and water transport and fluid homeostasis. Mediates the transport of chloride ions across the cell membrane. Possesses an intrinsic ATPase activity and utilizes ATP to gate its channel; the passive flow of anions through the channel is gated by cycles of ATP binding and hydrolysis by the ATP-binding domains. The ion channel is also permeable to HCO(3)(-); selectivity depends on the extracellular chloride concentration. Exerts its function also by modulating the activity of other ion channels and transporters. Contributes to the regulation of the pH and the ion content of the epithelial fluid layer. Modulates the activity of the epithelial sodium channel (ENaC) complex, in part by regulating the cell surface expression of the ENaC complex. May regulate bicarbonate secretion and salvage in epithelial cells by regulating the transporter SLC4A7. Can inhibit the chloride channel activity of ANO1. Plays a role in the chloride and bicarbonate homeostasis during sperm epididymal maturation and capacitation. This Muntiacus reevesi (Reeves' muntjac) protein is Cystic fibrosis transmembrane conductance regulator.